The sequence spans 556 residues: 2-succinyl-5-enolpyruvyl-6-hydroxy-3-cyclohexene-1-carboxylate synthase (556 aa).

Belongs to the TPP enzyme family. MenD subfamily. Homodimer. Mg(2+) is required as a cofactor. The cofactor is Mn(2+). Thiamine diphosphate serves as cofactor.

It catalyses the reaction isochorismate + 2-oxoglutarate + H(+) = 5-enolpyruvoyl-6-hydroxy-2-succinyl-cyclohex-3-ene-1-carboxylate + CO2. It participates in quinol/quinone metabolism; 1,4-dihydroxy-2-naphthoate biosynthesis; 1,4-dihydroxy-2-naphthoate from chorismate: step 2/7. It functions in the pathway quinol/quinone metabolism; menaquinone biosynthesis. Catalyzes the thiamine diphosphate-dependent decarboxylation of 2-oxoglutarate and the subsequent addition of the resulting succinic semialdehyde-thiamine pyrophosphate anion to isochorismate to yield 2-succinyl-5-enolpyruvyl-6-hydroxy-3-cyclohexene-1-carboxylate (SEPHCHC). This is 2-succinyl-5-enolpyruvyl-6-hydroxy-3-cyclohexene-1-carboxylate synthase from Escherichia coli O127:H6 (strain E2348/69 / EPEC).